The primary structure comprises 200 residues: ATP-dependent Clp protease proteolytic subunit (200 aa).

Serine 101 functions as the Nucleophile in the catalytic mechanism. The active site involves histidine 126.

The protein belongs to the peptidase S14 family. Component of the chloroplastic Clp protease core complex.

It localises to the plastid. The protein localises to the chloroplast stroma. It catalyses the reaction Hydrolysis of proteins to small peptides in the presence of ATP and magnesium. alpha-casein is the usual test substrate. In the absence of ATP, only oligopeptides shorter than five residues are hydrolyzed (such as succinyl-Leu-Tyr-|-NHMec, and Leu-Tyr-Leu-|-Tyr-Trp, in which cleavage of the -Tyr-|-Leu- and -Tyr-|-Trp bonds also occurs).. Its function is as follows. Cleaves peptides in various proteins in a process that requires ATP hydrolysis. Has a chymotrypsin-like activity. Plays a major role in the degradation of misfolded proteins. The protein is ATP-dependent Clp protease proteolytic subunit of Adiantum capillus-veneris (Maidenhair fern).